The sequence spans 148 residues: MQIVATNKKIRDYEILETYEAGIELKGTEVKSLRERNVSFKDAFCRVRDNEIYMLNLHISPYKFANRFNHDPERPRKLLLHKREIKRLIGKLTTTGLTLIPTKIYFNDHGLAKVEIALVRGKKRYDKREEIKRKEINRKIKTYLKYGE.

The protein belongs to the SmpB family.

It localises to the cytoplasm. Required for rescue of stalled ribosomes mediated by trans-translation. Binds to transfer-messenger RNA (tmRNA), required for stable association of tmRNA with ribosomes. tmRNA and SmpB together mimic tRNA shape, replacing the anticodon stem-loop with SmpB. tmRNA is encoded by the ssrA gene; the 2 termini fold to resemble tRNA(Ala) and it encodes a 'tag peptide', a short internal open reading frame. During trans-translation Ala-aminoacylated tmRNA acts like a tRNA, entering the A-site of stalled ribosomes, displacing the stalled mRNA. The ribosome then switches to translate the ORF on the tmRNA; the nascent peptide is terminated with the 'tag peptide' encoded by the tmRNA and targeted for degradation. The ribosome is freed to recommence translation, which seems to be the essential function of trans-translation. The sequence is that of SsrA-binding protein from Pseudothermotoga lettingae (strain ATCC BAA-301 / DSM 14385 / NBRC 107922 / TMO) (Thermotoga lettingae).